Reading from the N-terminus, the 603-residue chain is Serine/threonine-protein kinase PLK1 (603 aa).

A Glycyl lysine isopeptide (Lys-Gly) (interchain with G-Cter in ubiquitin) cross-link involves residue Lys19. The region spanning 53-305 (YVRGRFLGKG…IHELLNDEFF (253 aa)) is the Protein kinase domain. ATP contacts are provided by residues 59 to 67 (LGKGGFAKC) and Lys82. Ser103 carries the phosphoserine modification. Glu131 serves as a coordination point for ATP. Position 137 is a phosphoserine (Ser137). Catalysis depends on Asp176, which acts as the Proton acceptor. Residues 178–181 (KLGN) and Asp194 contribute to the ATP site. Residues 194–221 (DFGLATKVEYEGERKKTLCGTPNYIAPE) form an activation loop region. Thr210 is modified (phosphothreonine; by AURKA). Thr214 is subject to Phosphothreonine. Phosphoserine; by autocatalysis is present on residues Ser269 and Ser335. The short motif at 337 to 340 (RKPL) is the D-box that targets the protein for proteasomal degradation in anaphase element. Lys338 is covalently cross-linked (Glycyl lysine isopeptide (Lys-Gly) (interchain with G-Cter in SUMO2)). Ser375 and Ser450 each carry phosphoserine. One can recognise a POLO box 1 domain in the interval 410–488 (WVSKWVDYSD…LNYFRNYMSE (79 aa)). A Glycyl lysine isopeptide (Lys-Gly) (interchain with G-Cter in ubiquitin) cross-link involves residue Lys492. The linker stretch occupies residues 493–507 (AGANITPREGDELAR). Thr498 is modified (phosphothreonine). Residues 510–592 (YLRTWFRTRS…ARTMVDKLLS (83 aa)) enclose the POLO box 2 domain. The important for interaction with phosphorylated proteins stretch occupies residues 538–540 (HTK).

The protein belongs to the protein kinase superfamily. Ser/Thr protein kinase family. CDC5/Polo subfamily. Interacts with CEP170 and EVI5. Interacts and phosphorylates ERCC6L. Interacts with FAM29A. Interacts with SLX4/BTBD12 and TTDN1. Interacts with BUB1B. Interacts (via POLO-box domain) with the phosphorylated form of BUB1, CENPU and CDC25C. Interacts with isoform 3 of SGO1. Interacts with BORA, KIF2A and AURKA. Interacts with TOPORS and CYLD. Interacts with ECT2; the interaction is stimulated upon phosphorylation of ECT2 on 'Thr-444'. Interacts with PRC1. Interacts with KIF20A/MKLP2 (when phosphorylated), leading to the recruitment at the central spindle. Interacts (via POLO box domains) with PPP1R12A/MYPT1 (when previously phosphorylated by CDK1). Part of an astrin (SPAG5)-kinastrin (SKAP) complex containing KNSTRN, SPAG5, PLK1, DYNLL1 and SGO2A. Interacts with BIRC6/bruce. Interacts with CDK1-phosphorylated DCTN6 during mitotic prometaphase; the interaction facilitates recruitment to kinetochores. Interacts with CDK1-phosphorylated FRY; this interaction occurs in mitotic cells, but not in interphase cells. FRY interaction facilitates AURKA-mediated PLK1 phosphorylation. Interacts with CEP68; the interaction phosphorylates CEP68. Interacts (via POLO-box domain) with DCTN1. Interacts with CEP20 in later G1, S, G2 and M phases of the cell cycle; this interaction recruits PLK1 to centrosomes, a step required for S phase progression. Interacts with HSF1; this interaction increases upon heat shock but does not modulate neither HSF1 homotrimerization nor DNA-binding activities. Interacts with HNRNPU; this interaction induces phosphorylation of HNRNPU in mitosis. Interacts (via its N-terminus) with RIOK2. Interacts with KLHL22. Interacts (via POLO box domains) with NEDD9/HEF1 (via C-terminus). Interacts (via RVxF motif) with FIRRM; regulates PLK1 kinase activity. Interacts with SKA3; the interaction promotes the stability of PLK1. Interacts with the MTMR3:MTMR4 heterooligomer; brings CEP55 and PLK1 together during early mitosis, regulating the phosphorylation of CEP55 by PLK1 and its recruitment to the midbody where it can mediate cell abscission. In terms of processing, catalytic activity is enhanced by phosphorylation of Thr-210. Phosphorylation at Thr-210 is first detected on centrosomes in the G2 phase of the cell cycle, peaks in prometaphase and gradually disappears from centrosomes during anaphase. Dephosphorylation at Thr-210 at centrosomes is probably mediated by protein phosphatase 1C (PP1C), via interaction with PPP1R12A/MYPT1. Autophosphorylation and phosphorylation of Ser-137 may not be significant for the activation of PLK1 during mitosis, but may enhance catalytic activity during recovery after DNA damage checkpoint. Phosphorylated in vitro by STK10. Post-translationally, ubiquitinated by the anaphase promoting complex/cyclosome (APC/C) in anaphase and following DNA damage, leading to its degradation by the proteasome. Ubiquitination is mediated via its interaction with FZR1/CDH1. Ubiquitination and subsequent degradation prevents entry into mitosis and is essential to maintain an efficient G2 DNA damage checkpoint. Monoubiquitination at Lys-492 by the BCR(KLHL22) ubiquitin ligase complex does not lead to degradation: it promotes PLK1 dissociation from phosphoreceptor proteins and subsequent removal from kinetochores, allowing silencing of the spindle assembly checkpoint (SAC) and chromosome segregation. As to expression, newborn and adult spleen, fetal and newborn kidney, liver, brain, thymus and adult bone marrow, thymus, ovary and testes.

It is found in the nucleus. It localises to the chromosome. The protein resides in the centromere. The protein localises to the kinetochore. Its subcellular location is the cytoplasm. It is found in the cytoskeleton. It localises to the microtubule organizing center. The protein resides in the centrosome. The protein localises to the spindle. Its subcellular location is the midbody. The catalysed reaction is L-seryl-[protein] + ATP = O-phospho-L-seryl-[protein] + ADP + H(+). The enzyme catalyses L-threonyl-[protein] + ATP = O-phospho-L-threonyl-[protein] + ADP + H(+). Its activity is regulated as follows. Activated by phosphorylation of Thr-210 by AURKA; phosphorylation by AURKA is enhanced by BORA. Once activated, activity is stimulated by binding target proteins. Binding of target proteins has no effect on the non-activated kinase. Several inhibitors targeting PLKs are currently in development and are under investigation in a growing number of clinical trials, such as BI 2536, an ATP-competitive PLK1 inhibitor or BI 6727, a dihydropteridinone that specifically inhibits the catalytic activity of PLK1. Functionally, serine/threonine-protein kinase that performs several important functions throughout M phase of the cell cycle, including the regulation of centrosome maturation and spindle assembly, the removal of cohesins from chromosome arms, the inactivation of anaphase-promoting complex/cyclosome (APC/C) inhibitors, and the regulation of mitotic exit and cytokinesis. Polo-like kinase proteins act by binding and phosphorylating proteins that are already phosphorylated on a specific motif recognized by the POLO box domains. Phosphorylates BORA, BUB1B/BUBR1, CCNB1, CDC25C, CEP55, ECT2, ERCC6L, FBXO5/EMI1, FOXM1, KIF20A/MKLP2, CENPU, NEDD1, NINL, NPM1, NUDC, PKMYT1/MYT1, KIZ, MRE11, PPP1R12A/MYPT1, POLQ, PRC1, RACGAP1/CYK4, RAD51, RHNO1, SGO1, STAG2/SA2, TEX14, TOPORS, p73/TP73, TPT1, WEE1 and HNRNPU. Plays a key role in centrosome functions and the assembly of bipolar spindles by phosphorylating KIZ, NEDD1 and NINL. NEDD1 phosphorylation promotes subsequent targeting of the gamma-tubulin ring complex (gTuRC) to the centrosome, an important step for spindle formation. Phosphorylation of NINL component of the centrosome leads to NINL dissociation from other centrosomal proteins. Involved in mitosis exit and cytokinesis by phosphorylating CEP55, ECT2, KIF20A/MKLP2, CENPU, PRC1 and RACGAP1. Recruited at the central spindle by phosphorylating and docking PRC1 and KIF20A/MKLP2; creates its own docking sites on PRC1 and KIF20A/MKLP2 by mediating phosphorylation of sites subsequently recognized by the POLO box domains. Phosphorylates RACGAP1, thereby creating a docking site for the Rho GTP exchange factor ECT2 that is essential for the cleavage furrow formation. Promotes the central spindle recruitment of ECT2. Plays a central role in G2/M transition of mitotic cell cycle by phosphorylating CCNB1, CDC25C, FOXM1, CENPU, PKMYT1/MYT1, PPP1R12A/MYPT1 and WEE1. Part of a regulatory circuit that promotes the activation of CDK1 by phosphorylating the positive regulator CDC25C and inhibiting the negative regulators WEE1 and PKMYT1/MYT1. Also acts by mediating phosphorylation of cyclin-B1 (CCNB1) on centrosomes in prophase. Phosphorylates FOXM1, a key mitotic transcription regulator, leading to enhance FOXM1 transcriptional activity. Involved in kinetochore functions and sister chromatid cohesion by phosphorylating BUB1B/BUBR1, FBXO5/EMI1 and STAG2/SA2. PLK1 is high on non-attached kinetochores suggesting a role of PLK1 in kinetochore attachment or in spindle assembly checkpoint (SAC) regulation. Required for kinetochore localization of BUB1B. Regulates the dissociation of cohesin from chromosomes by phosphorylating cohesin subunits such as STAG2/SA2. Phosphorylates SGO1: required for spindle pole localization of isoform 3 of SGO1 and plays a role in regulating its centriole cohesion function. Mediates phosphorylation of FBXO5/EMI1, a negative regulator of the APC/C complex during prophase, leading to FBXO5/EMI1 ubiquitination and degradation by the proteasome. Acts as a negative regulator of p53 family members: phosphorylates TOPORS, leading to inhibit the sumoylation of p53/TP53 and simultaneously enhance the ubiquitination and subsequent degradation of p53/TP53. Phosphorylates the transactivation domain of the transcription factor p73/TP73, leading to inhibit p73/TP73-mediated transcriptional activation and pro-apoptotic functions. Phosphorylates BORA, and thereby promotes the degradation of BORA. Contributes to the regulation of AURKA function. Also required for recovery after DNA damage checkpoint and entry into mitosis. Phosphorylates MISP, leading to stabilization of cortical and astral microtubule attachments required for proper spindle positioning. Together with MEIKIN, acts as a regulator of kinetochore function during meiosis I: required both for mono-orientation of kinetochores on sister chromosomes and protection of centromeric cohesin from separase-mediated cleavage. Phosphorylates CEP68 and is required for its degradation. Regulates nuclear envelope breakdown during prophase by phosphorylating DCTN1 resulting in its localization in the nuclear envelope. Phosphorylates the heat shock transcription factor HSF1, promoting HSF1 nuclear translocation upon heat shock. Phosphorylates HSF1 also in the early mitotic period; this phosphorylation regulates HSF1 localization to the spindle pole, the recruitment of the SCF(BTRC) ubiquitin ligase complex induicing HSF1 degradation, and hence mitotic progression. Regulates mitotic progression by phosphorylating RIOK2. Through the phosphorylation of DZIP1 regulates the localization during mitosis of the BBSome, a ciliary protein complex involved in cilium biogenesis. Regulates DNA repair during mitosis by mediating phosphorylation of POLQ and RHNO1, thereby promoting POLQ recruitment to DNA damage sites. Phosphorylates ATXN10 which may play a role in the regulation of cytokinesis and may stimulate the proteasome-mediated degradation of ATXN10. This is Serine/threonine-protein kinase PLK1 (Plk1) from Mus musculus (Mouse).